A 258-amino-acid polypeptide reads, in one-letter code: uncharacterized protein (258 aa).

6 helical membrane passes run 24 to 44 (IPLF…VNIF), 70 to 90 (PLVH…FLLM), 100 to 120 (LCTI…AYLI), 130 to 150 (VYVG…LNLF), 157 to 177 (LLNL…VLGL), and 181 to 201 (FSIT…FSFA). Residue His-188 is part of the active site.

Belongs to the peptidase S54 family.

It localises to the golgi apparatus membrane. This is an uncharacterized protein from Schizosaccharomyces pombe (strain 972 / ATCC 24843) (Fission yeast).